The sequence spans 338 residues: Protein UL141 (338 aa).

The N-terminal stretch at 1 to 25 (MCRRESLRTLPWLFWVLLSCPRLLE) is a signal peptide. The Extracellular portion of the chain corresponds to 37-278 (DIAEKMWAEN…DTGMSPWATR (242 aa)). Residues N117, N132, and N147 are each glycosylated (N-linked (GlcNAc...) asparagine; by host). The helical transmembrane segment at 279–299 (GIAAFLGFWSIFTVCFLCYLC) threads the bilayer. Topologically, residues 300–338 (YLQCCGHWCPTPGRGRRGGEGYRRLPTYDSYPGVKKMKR) are cytoplasmic.

In terms of assembly, interacts with human PVR. Interacts with human TNFRSF10A and TNFRSF10B. Forms a homodimer that engages two TNFRSF10B monomers.

Its subcellular location is the host endoplasmic reticulum membrane. In terms of biological role, evasion of NK cell killing. Blocks surface expression of PVR which is a ligand for NK cell-activating receptors. Binds human PVR in the endoplasmic reticulum and prevents its maturation and transport to the cell surface. Targets also the natural killer cell activating ligand NECTIN2 for proteasome-mediated degradation. Additionally promotes intracellular retention of TNFRSF10A/TRAIL-R1 and TNFRSF10B/TRAIL-R2 and thus down-regulates their cell surface expression. The chain is Protein UL141 (UL141) from Human cytomegalovirus (strain Merlin) (HHV-5).